The sequence spans 332 residues: Glyceraldehyde-3-phosphate dehydrogenase 1 (332 aa).

NAD(+) is bound by residues 11–12 (RI), aspartate 33, and arginine 78. D-glyceraldehyde 3-phosphate-binding positions include 149 to 151 (SCT), threonine 180, 209 to 210 (TG), and arginine 232. The Nucleophile role is filled by cysteine 150. Residue asparagine 314 coordinates NAD(+).

It belongs to the glyceraldehyde-3-phosphate dehydrogenase family. Homotetramer.

It localises to the cytoplasm. It catalyses the reaction D-glyceraldehyde 3-phosphate + phosphate + NAD(+) = (2R)-3-phospho-glyceroyl phosphate + NADH + H(+). It participates in carbohydrate degradation; glycolysis; pyruvate from D-glyceraldehyde 3-phosphate: step 1/5. This is Glyceraldehyde-3-phosphate dehydrogenase 1 (GPD1) from Candida glabrata (strain ATCC 2001 / BCRC 20586 / JCM 3761 / NBRC 0622 / NRRL Y-65 / CBS 138) (Yeast).